The sequence spans 172 residues: 3-hydroxydecanoyl-[acyl-carrier-protein] dehydratase (172 aa).

The active site involves His-71.

The protein belongs to the thioester dehydratase family. FabA subfamily. As to quaternary structure, homodimer.

It localises to the cytoplasm. It carries out the reaction a (3R)-hydroxyacyl-[ACP] = a (2E)-enoyl-[ACP] + H2O. The catalysed reaction is (3R)-hydroxydecanoyl-[ACP] = (2E)-decenoyl-[ACP] + H2O. It catalyses the reaction (2E)-decenoyl-[ACP] = (3Z)-decenoyl-[ACP]. It functions in the pathway lipid metabolism; fatty acid biosynthesis. In terms of biological role, necessary for the introduction of cis unsaturation into fatty acids. Catalyzes the dehydration of (3R)-3-hydroxydecanoyl-ACP to E-(2)-decenoyl-ACP and then its isomerization to Z-(3)-decenoyl-ACP. Can catalyze the dehydratase reaction for beta-hydroxyacyl-ACPs with saturated chain lengths up to 16:0, being most active on intermediate chain length. This is 3-hydroxydecanoyl-[acyl-carrier-protein] dehydratase from Photorhabdus laumondii subsp. laumondii (strain DSM 15139 / CIP 105565 / TT01) (Photorhabdus luminescens subsp. laumondii).